Reading from the N-terminus, the 180-residue chain is Oligoribonuclease (180 aa).

Residues 7–170 (LIWIDLEMTG…DDIRESIAEL (164 aa)) form the Exonuclease domain. Residue Y128 is part of the active site.

The protein belongs to the oligoribonuclease family.

It localises to the cytoplasm. In terms of biological role, 3'-to-5' exoribonuclease specific for small oligoribonucleotides. In Pseudomonas entomophila (strain L48), this protein is Oligoribonuclease.